The chain runs to 370 residues: Asporin (370 aa).

Residues 1–15 (MKVYVLLVFLTLCSA) form the signal peptide. O-linked (GalNAc...) serine glycosylation occurs at Ser-45. The 37-residue stretch at 56–92 (FFPFDLFSTCPFGCQCYSRVVHCSDLGLSSVPSNIPF) folds into the LRRNT domain. Disulfide bonds link Cys-65/Cys-71 and Cys-69/Cys-78. LRR repeat units lie at residues 93-114 (DTRM…DFKG), 117-138 (SLYA…AFLT), 141-163 (KLRR…PKSL), 164-183 (AELR…TFKG), 186-209 (ALHV…AFEG), 232-253 (TLLE…DFKR), 256-277 (DLQR…SLAN), 280-302 (RVRE…QELK), 303-324 (YLQI…DFCP), 332-354 (SLYS…PATF), and 355-370 (RCVL…NFRK). The N-linked (GlcNAc...) asparagine glycan is linked to Asn-272. Cys-323 and Cys-356 form a disulfide bridge.

Belongs to the small leucine-rich proteoglycan (SLRP) family. SLRP class I subfamily.

It is found in the secreted. The protein resides in the extracellular space. Its subcellular location is the extracellular matrix. The polypeptide is Asporin (ASPN) (Bos taurus (Bovine)).